The sequence spans 262 residues: Acyl-[acyl-carrier-protein]--UDP-N-acetylglucosamine O-acyltransferase (262 aa).

Belongs to the transferase hexapeptide repeat family. LpxA subfamily. Homotrimer.

Its subcellular location is the cytoplasm. The enzyme catalyses a (3R)-hydroxyacyl-[ACP] + UDP-N-acetyl-alpha-D-glucosamine = a UDP-3-O-[(3R)-3-hydroxyacyl]-N-acetyl-alpha-D-glucosamine + holo-[ACP]. It participates in glycolipid biosynthesis; lipid IV(A) biosynthesis; lipid IV(A) from (3R)-3-hydroxytetradecanoyl-[acyl-carrier-protein] and UDP-N-acetyl-alpha-D-glucosamine: step 1/6. Functionally, involved in the biosynthesis of lipid A, a phosphorylated glycolipid that anchors the lipopolysaccharide to the outer membrane of the cell. The polypeptide is Acyl-[acyl-carrier-protein]--UDP-N-acetylglucosamine O-acyltransferase (Histophilus somni (strain 129Pt) (Haemophilus somnus)).